Reading from the N-terminus, the 187-residue chain is UPF0301 protein YqgE (187 aa).

This sequence belongs to the UPF0301 (AlgH) family.

The protein is UPF0301 protein YqgE of Salmonella heidelberg (strain SL476).